The primary structure comprises 173 residues: GAIIAGAALGFNVHQTVLKALGQVSRKIAIGVDNESGGTWTALNAYFRSGTTDVILPEFVPNQKALLYSGQKDTGPVATGAVGVLAYYMSDGNTLGVMFSVPFDYNLYSNWWDVKVYRGRRRADQAMYEGLLYGIPYGGDNGWHARKLGYGLKGRGFMKSSAQSILEIHVTKA.

Residues 6–25 (GAALGFNVHQTVLKALGQVS) form an N-terminal region region. The phosphocholine site is built by Ser49, Val82, Ser100, Pro102, Tyr128, and Tyr133. The trp-rich region, which is important for the binding to lipid membrane stretch occupies residues 100–115 (SVPFDYNLYSNWWDVK).

Belongs to the actinoporin family. Sea anemone subfamily. Octamer or nonamer in membranes. Monomer in the soluble state.

The protein localises to the secreted. It is found in the nematocyst. It localises to the target cell membrane. In terms of biological role, pore-forming protein that forms cations-selective hydrophilic pores of around 1 nm and causes cardiac stimulation and cytolysis. Pore formation is a multi-step process that involves specific recognition of membrane sphingomyelin (but neither cholesterol nor phosphatidylcholine) using aromatic rich region and adjacent phosphocholine (POC) binding site, firm binding to the membrane (mainly driven by hydrophobic interactions) accompanied by the transfer of the N-terminal region to the lipid-water interface and finally pore formation after oligomerization of monomers. Cytolytic effects include red blood cells hemolysis, platelet aggregation and lysis, cytotoxic and cytostatic effects on fibroblasts. Lethality in mammals has been ascribed to severe vasospasm of coronary vessels, cardiac arrhythmia, and inotropic effects. The protein is DELTA-actitoxin-Oor1b of Oulactis orientalis (Japan anemone).